The following is a 469-amino-acid chain: Probable cobyric acid synthase (469 aa).

The GATase cobBQ-type domain maps to 241–427 (SGSIGIVRYP…VHGILENNEF (187 aa)). Cys319 functions as the Nucleophile in the catalytic mechanism. The active site involves His419.

It belongs to the CobB/CobQ family. CobQ subfamily.

The protein operates within cofactor biosynthesis; adenosylcobalamin biosynthesis. Its function is as follows. Catalyzes amidations at positions B, D, E, and G on adenosylcobyrinic A,C-diamide. NH(2) groups are provided by glutamine, and one molecule of ATP is hydrogenolyzed for each amidation. The sequence is that of Probable cobyric acid synthase from Picrophilus torridus (strain ATCC 700027 / DSM 9790 / JCM 10055 / NBRC 100828 / KAW 2/3).